A 137-amino-acid polypeptide reads, in one-letter code: Large ribosomal subunit protein uL16 (137 aa).

Residues 1–14 (MLQPNRRKFRKEHK) are compositionally biased toward basic residues. The segment at 1–22 (MLQPNRRKFRKEHKGRNEGLAT) is disordered.

Belongs to the universal ribosomal protein uL16 family. In terms of assembly, part of the 50S ribosomal subunit.

In terms of biological role, binds 23S rRNA and is also seen to make contacts with the A and possibly P site tRNAs. The polypeptide is Large ribosomal subunit protein uL16 (Dechloromonas aromatica (strain RCB)).